The sequence spans 99 residues: Plastocyanin (99 aa).

Residues 1–99 enclose the Plastocyanin-like domain; it reads IEVLLGGDDG…AGMVGKVTVN (99 aa). Residues H37, C84, H87, and M92 each coordinate Cu cation.

This sequence belongs to the plastocyanin family. It depends on Cu(2+) as a cofactor.

The protein localises to the plastid. The protein resides in the chloroplast thylakoid membrane. Its function is as follows. Participates in electron transfer between P700 and the cytochrome b6-f complex in photosystem I. The protein is Plastocyanin (PETE) of Cucurbita pepo (Vegetable marrow).